A 664-amino-acid chain; its full sequence is NADH-ubiquinone oxidoreductase chain 5 (664 aa).

17 helical membrane passes run 2 to 22 (LLLT…LFGF), 28 to 48 (GSVF…LIII), 77 to 97 (FLFD…STLV), 120 to 140 (LFTF…MFVG), 168 to 188 (AMLV…TIFY), 210 to 230 (FIFF…IFIG), 250 to 270 (GPTP…GVYL), 285 to 305 (LKII…VGLV), 321 to 341 (LGYM…FHLS), 342 to 362 (NHAY…HAMG), 376 to 396 (ILPF…GFPF), 424 to 444 (LGTI…FFAF), 462 to 482 (PLEM…IGYI), 521 to 541 (LPVI…FFKF), 590 to 610 (IDKG…FSFL), 614 to 634 (IILL…ISTI), and 639 to 659 (IIFF…FLFI).

It belongs to the complex I subunit 5 family.

It is found in the mitochondrion inner membrane. The catalysed reaction is a ubiquinone + NADH + 5 H(+)(in) = a ubiquinol + NAD(+) + 4 H(+)(out). Functionally, core subunit of the mitochondrial membrane respiratory chain NADH dehydrogenase (Complex I) that is believed to belong to the minimal assembly required for catalysis. Complex I functions in the transfer of electrons from NADH to the respiratory chain. The immediate electron acceptor for the enzyme is believed to be ubiquinone. This Phytophthora infestans (Potato late blight agent) protein is NADH-ubiquinone oxidoreductase chain 5 (ND5).